The following is a 121-amino-acid chain: Auxin-responsive protein SAUR32 (121 aa).

It belongs to the ARG7 family. As to expression, expressed in roots, leaves and stems.

It is found in the nucleus. Its subcellular location is the cytoplasm. Its function is as follows. May play a role in the apical hook development. The sequence is that of Auxin-responsive protein SAUR32 from Arabidopsis thaliana (Mouse-ear cress).